We begin with the raw amino-acid sequence, 164 residues long: Cytochrome c-type biogenesis protein CcmE (164 aa).

Over 1-8 (MNPRRQKR) the chain is Cytoplasmic. A helical; Signal-anchor for type II membrane protein membrane pass occupies residues 9–29 (LIVISAIVLVIGAAIGLMLYA). At 30–164 (LSQNIDLFYT…QAYSTPKVSG (135 aa)) the chain is on the periplasmic side. Residues His132 and Tyr136 each coordinate heme.

The protein belongs to the CcmE/CycJ family.

It is found in the cell inner membrane. Heme chaperone required for the biogenesis of c-type cytochromes. Transiently binds heme delivered by CcmC and transfers the heme to apo-cytochromes in a process facilitated by CcmF and CcmH. This Pseudoalteromonas atlantica (strain T6c / ATCC BAA-1087) protein is Cytochrome c-type biogenesis protein CcmE.